The primary structure comprises 674 residues: Carbon monoxide dehydrogenase/acetyl-CoA synthase subunit beta (674 aa).

The segment at 1–25 is disordered; it reads MPRFRDLSHNCRPSEAPRVMEPKNR. Residues Cys59, Cys67, Cys68, Cys71, Cys76, and Cys90 each coordinate [4Fe-4S] cluster. Residues His283, Cys317, Cys355, Cys470, Cys500, and Cys550 each coordinate [Ni-4Fe-4S] cluster.

Tetramer of two alpha and two beta chains. It depends on [Ni-Fe-S] cluster as a cofactor. [4Fe-4S] cluster serves as cofactor.

It carries out the reaction CO + 2 oxidized [2Fe-2S]-[ferredoxin] + H2O = 2 reduced [2Fe-2S]-[ferredoxin] + CO2 + 2 H(+). Functionally, the beta subunit (this protein) generates CO from CO(2), while the alpha subunit combines the CO with CoA and a methyl group to form acetyl-CoA. The methyl group, which is incorporated into acetyl-CoA, is transferred to the alpha subunit by a corrinoid iron-sulfur protein. This chain is Carbon monoxide dehydrogenase/acetyl-CoA synthase subunit beta, found in Moorella thermoacetica (Clostridium thermoaceticum).